A 335-amino-acid chain; its full sequence is Nuclear distribution protein nudE homolog 1 (335 aa).

Positions 1–93 (MEDSGKTFSS…VQHSEGYRQI (93 aa)) are self-association. The stretch at 18–188 (WKDLAMTYKQ…ELAVQQKQEK (171 aa)) forms a coiled coil. The interval 88–156 (EGYRQISALE…ERNAFLESEL (69 aa)) is interaction with PAFAH1B1. Residues 167–290 (QRLKDEARDL…QSPNRTGGPA (124 aa)) are interaction with CENPF. Residues 181–246 (AVQQKQEKPR…DDSTGGTPLT (66 aa)) form a disordered region. A compositionally biased stretch (polar residues) spans 204–214 (TAVQATGSVPS). The residue at position 211 (Ser211) is a Phosphoserine. A phosphothreonine mark is found at Thr215 and Thr228. 2 positions are modified to phosphoserine: Ser231 and Ser239. Phosphothreonine is present on residues Thr243 and Thr246. Residue Cys274 is the site of S-palmitoyl cysteine; by ZDHHC2, ZDHHC3 and ZDHHC7 attachment. The disordered stretch occupies residues 279 to 335 (YDQSPNRTGGPASGRSSKNRDGGERRPSSTSVPLGDKGLDTSCRWLSKSTTRSSSSC). Ser282 is subject to Phosphoserine. A compositionally biased stretch (basic and acidic residues) spans 296 to 305 (KNRDGGERRP). At Ser309 the chain carries Phosphoserine. Residues 325 to 335 (SKSTTRSSSSC) show a composition bias toward low complexity.

The protein belongs to the nudE family. Homodimer. Interacts with CNTRL, LIS1, dynein, SLMAP and TCP1. Interacts with CENPF, dynactin, tubulin gamma, PAFAH1B1, PCM1 and PCNT. Interacts with ZNF365. Interacts with GTP-bound RAB9A and RAB9B; the interaction leads to RAB9-dynein motor tethering. Interacts (via C-terminus) with MCRS1 (via C-terminus); phosphorylation of NDE1 inhibits the interaction. In terms of processing, phosphorylated in mitosis. Phosphorylated in vitro by CDC2. Phosphorylation at Thr-246 is essential for the G2/M transition. In terms of tissue distribution, expressed in the neuroepithelium throughout the developing brain, including the cerebral cortex and cerebellum.

The protein resides in the cytoplasm. Its subcellular location is the cytoskeleton. It localises to the microtubule organizing center. The protein localises to the centrosome. It is found in the chromosome. The protein resides in the centromere. Its subcellular location is the kinetochore. It localises to the spindle. The protein localises to the cleavage furrow. It is found in the cytoplasmic vesicle membrane. Its function is as follows. Required for centrosome duplication and formation and function of the mitotic spindle. Essential for the development of the cerebral cortex. May regulate the production of neurons by controlling the orientation of the mitotic spindle during division of cortical neuronal progenitors of the proliferative ventricular zone of the brain. Orientation of the division plane perpendicular to the layers of the cortex gives rise to two proliferative neuronal progenitors whereas parallel orientation of the division plane yields one proliferative neuronal progenitor and a postmitotic neuron. A premature shift towards a neuronal fate within the progenitor population may result in an overall reduction in the final number of neurons and an increase in the number of neurons in the deeper layers of the cortex. Acts as a RAB9A/B effector that tethers RAB9-associated late endosomes to the dynein motor for their retrograde transport to the trans-Golgi network. The protein is Nuclear distribution protein nudE homolog 1 of Homo sapiens (Human).